A 349-amino-acid chain; its full sequence is Eukaryotic translation initiation factor 3 subunit I (349 aa).

WD repeat units lie at residues G8–E49, H51–E91, P93–K135, S148–T187, E197–K239, and G295–D336.

This sequence belongs to the eIF-3 subunit I family. As to quaternary structure, component of the eukaryotic translation initiation factor 3 (eIF-3) complex.

The protein localises to the cytoplasm. Functionally, component of the eukaryotic translation initiation factor 3 (eIF-3) complex, which is involved in protein synthesis of a specialized repertoire of mRNAs and, together with other initiation factors, stimulates binding of mRNA and methionyl-tRNAi to the 40S ribosome. The eIF-3 complex specifically targets and initiates translation of a subset of mRNAs involved in cell proliferation. The chain is Eukaryotic translation initiation factor 3 subunit I from Debaryomyces hansenii (strain ATCC 36239 / CBS 767 / BCRC 21394 / JCM 1990 / NBRC 0083 / IGC 2968) (Yeast).